Consider the following 2635-residue polypeptide: Large tegument protein deneddylase (2635 aa).

Residues 1-233 (MAAQPLYMEG…LHGPRMDISR (233 aa)) form a deubiquitination activity region. The 215-residue stretch at 9–223 (EGMASTHQAN…NHYRTIVFEE (215 aa)) folds into the Peptidase C76 domain. Residues cysteine 29, aspartate 159, and histidine 161 contribute to the active site. Disordered stretches follow at residues 243 to 497 (ITSP…DRYA), 2238 to 2269 (PLTI…QQPK), 2357 to 2438 (RTAL…KRAA), and 2500 to 2533 (KAGW…DDKS). Over residues 245–255 (SPSVSPAPSEA) the composition is skewed to low complexity. Basic and acidic residues-rich tracts occupy residues 256–270 (PLRR…ETRP) and 282–295 (PTDR…DRPP). The interaction with inner tegument protein stretch occupies residues 316 to 325 (KTGRGGNEGR). The segment covering 330–346 (PPDEHQPPHITAEHMDQ) has biased composition (basic and acidic residues). Low complexity predominate over residues 448–461 (DDPLTPLYPLTDTP). Residues 2379–2402 (TLTFRLPPTAPTPATAALETKTTP) show a composition bias toward low complexity. Basic and acidic residues predominate over residues 2425-2437 (HARDTSPPAEKRA).

The protein belongs to the herpesviridae large tegument protein family. In terms of assembly, interacts with host CUL1 and CUL4A; these interactions inhibit the E3 ligase activity of cullins. Interacts with inner tegument protein. Interacts with capsid vertex specific component CVC2. Interacts with the major capsid protein/MCP.

The protein resides in the virion tegument. It is found in the host cytoplasm. The protein localises to the host nucleus. It catalyses the reaction Thiol-dependent hydrolysis of ester, thioester, amide, peptide and isopeptide bonds formed by the C-terminal Gly of ubiquitin (a 76-residue protein attached to proteins as an intracellular targeting signal).. In terms of biological role, large tegument protein that plays multiple roles in the viral cycle. During viral entry, remains associated with the capsid while most of the tegument is detached and participates in the capsid transport toward the host nucleus. Plays a role in the routing of the capsid at the nuclear pore complex and subsequent uncoating. Within the host nucleus, acts as a deneddylase and promotes the degradation of nuclear CRLs (cullin-RING ubiquitin ligases) and thereby stabilizes nuclear CRL substrates, while cytoplasmic CRLs remain unaffected. These modifications prevent host cell cycle S-phase progression and create a favorable environment allowing efficient viral genome replication. Participates later in the secondary envelopment of capsids. Indeed, plays a linker role for the association of the outer viral tegument to the capsids together with the inner tegument protein. This Homo sapiens (Human) protein is Large tegument protein deneddylase.